The sequence spans 178 residues: CASP-like protein 2U3 (178 aa).

Residues 1-4 are Cytoplasmic-facing; sequence MACR. The helical transmembrane segment at 5–25 threads the bilayer; the sequence is VMEVLLRVLAILLSIAGALVM. At 26 to 52 the chain is on the extracellular side; it reads AKDKQDTFVMLGTVPVPLYARHSYVEA. A helical transmembrane segment spans residues 53–73; that stretch reads FVFLVYANGIVAIYCFIAVLL. Residues 74-80 lie on the Cytoplasmic side of the membrane; sequence SLLAKSR. Residues 81-101 traverse the membrane as a helical segment; sequence VLAGLLFFMDQALAYLLLAAA. The Extracellular segment spans residues 102 to 132; the sequence is AASTEVAYIAKRGEKKLVWGEVCSNFEHFCN. The helical transmembrane segment at 133 to 153 threads the bilayer; it reads LVGVSLVLTFLSVLVLVTLAI. Topologically, residues 154-178 are cytoplasmic; it reads LSGKRLFGHPPLCAPPSTPPVHQGV.

Belongs to the Casparian strip membrane proteins (CASP) family. In terms of assembly, homodimer and heterodimers.

The protein localises to the cell membrane. The protein is CASP-like protein 2U3 of Pteridium aquilinum subsp. aquilinum (Bracken fern).